Consider the following 190-residue polypeptide: Heme-binding protein 1 (190 aa).

It belongs to the HEBP family. In terms of assembly, monomer. Ubiquitously expressed. Extremely abundant in liver.

It localises to the cytoplasm. Functionally, may bind free porphyrinogens that may be present in the cell and thus facilitate removal of these potentially toxic compound. Binds with a high affinity to one molecule of heme or porphyrins. It binds metalloporphyrins, free porphyrins and N-methylprotoporphyrin with similar affinities. The sequence is that of Heme-binding protein 1 (Hebp1) from Mus musculus (Mouse).